A 902-amino-acid chain; its full sequence is Glycogen phosphorylase (902 aa).

The interval 1 to 21 (MPPASTSTTNDMITEEPTSPH) is disordered. Threonine 31 is modified (phosphothreonine). Position 333 is a phosphoserine (serine 333). An N6-(pyridoxal phosphate)lysine modification is found at lysine 751.

It belongs to the glycogen phosphorylase family. In terms of assembly, homodimer. The cofactor is pyridoxal 5'-phosphate.

Its subcellular location is the cytoplasm. The protein resides in the cytosol. It catalyses the reaction [(1-&gt;4)-alpha-D-glucosyl](n) + phosphate = [(1-&gt;4)-alpha-D-glucosyl](n-1) + alpha-D-glucose 1-phosphate. Its activity is regulated as follows. Activated by phosphorylation of Thr-31. Functionally, phosphorylase is an important allosteric enzyme in carbohydrate metabolism. Enzymes from different sources differ in their regulatory mechanisms and in their natural substrates. However, all known phosphorylases share catalytic and structural properties. The sequence is that of Glycogen phosphorylase (GPH1) from Saccharomyces cerevisiae (strain ATCC 204508 / S288c) (Baker's yeast).